Here is a 251-residue protein sequence, read N- to C-terminus: UDP-Glc:alpha-D-GlcNAc-diphosphoundecaprenol beta-1,3-glucosyltransferase WfaP (251 aa).

The protein belongs to the glycosyltransferase 2 family. Requires Mn(2+) as cofactor. The cofactor is Mg(2+).

It is found in the cell inner membrane. It carries out the reaction N-acetyl-alpha-D-glucosaminyl-di-trans,octa-cis-undecaprenyl diphosphate + UDP-alpha-D-glucose = beta-D-Glc-(1-&gt;3)-alpha-D-GlcNAc-di-trans,octa-cis-undecaprenyl diphosphate + UDP + H(+). The protein operates within bacterial outer membrane biogenesis; lipopolysaccharide biosynthesis. In terms of biological role, catalyzes the addition of Glc, the second sugar moiety of the O56-antigen repeating unit, to GlcNAc-pyrophosphate-undecaprenol. The chain is UDP-Glc:alpha-D-GlcNAc-diphosphoundecaprenol beta-1,3-glucosyltransferase WfaP (wfaP) from Escherichia coli.